The sequence spans 546 residues: Chaperonin GroEL (546 aa).

ATP-binding positions include 30–33, Lys-51, 87–91, Gly-415, 479–481, and Asp-495; these read TLGP, DGTTT, and NAA.

This sequence belongs to the chaperonin (HSP60) family. As to quaternary structure, forms a cylinder of 14 subunits composed of two heptameric rings stacked back-to-back. Interacts with the co-chaperonin GroES.

It is found in the cytoplasm. The enzyme catalyses ATP + H2O + a folded polypeptide = ADP + phosphate + an unfolded polypeptide.. In terms of biological role, together with its co-chaperonin GroES, plays an essential role in assisting protein folding. The GroEL-GroES system forms a nano-cage that allows encapsulation of the non-native substrate proteins and provides a physical environment optimized to promote and accelerate protein folding. This chain is Chaperonin GroEL, found in Xanthomonas campestris pv. phaseoli.